We begin with the raw amino-acid sequence, 221 residues long: Cytidylate kinase 1 (221 aa).

7 to 15 lines the ATP pocket; it reads GPSASGKSS.

It belongs to the cytidylate kinase family. Type 1 subfamily.

It localises to the cytoplasm. The enzyme catalyses CMP + ATP = CDP + ADP. The catalysed reaction is dCMP + ATP = dCDP + ADP. The chain is Cytidylate kinase 1 from Borreliella afzelii (strain PKo) (Borrelia afzelii).